Here is a 31-residue protein sequence, read N- to C-terminus: Cytochrome b6-f complex subunit 6 (31 aa).

The helical transmembrane segment at 4 to 24 (ITSYFGFLLAALTITSVLFIG) threads the bilayer.

This sequence belongs to the PetL family. The 4 large subunits of the cytochrome b6-f complex are cytochrome b6, subunit IV (17 kDa polypeptide, PetD), cytochrome f and the Rieske protein, while the 4 small subunits are PetG, PetL, PetM and PetN. The complex functions as a dimer.

Its subcellular location is the plastid. It is found in the chloroplast thylakoid membrane. Component of the cytochrome b6-f complex, which mediates electron transfer between photosystem II (PSII) and photosystem I (PSI), cyclic electron flow around PSI, and state transitions. PetL is important for photoautotrophic growth as well as for electron transfer efficiency and stability of the cytochrome b6-f complex. The chain is Cytochrome b6-f complex subunit 6 from Arabidopsis thaliana (Mouse-ear cress).